The chain runs to 197 residues: 7-methyl-GTP pyrophosphatase (197 aa).

Residue D69 is the Proton acceptor of the active site.

Belongs to the Maf family. YceF subfamily. A divalent metal cation serves as cofactor.

It is found in the cytoplasm. It catalyses the reaction N(7)-methyl-GTP + H2O = N(7)-methyl-GMP + diphosphate + H(+). Its function is as follows. Nucleoside triphosphate pyrophosphatase that hydrolyzes 7-methyl-GTP (m(7)GTP). May have a dual role in cell division arrest and in preventing the incorporation of modified nucleotides into cellular nucleic acids. The chain is 7-methyl-GTP pyrophosphatase from Syntrophotalea carbinolica (strain DSM 2380 / NBRC 103641 / GraBd1) (Pelobacter carbinolicus).